Here is a 295-residue protein sequence, read N- to C-terminus: MNAEEAQQQAAILSSALPFLRRYAGDTIVVKYGGHAMGEGKLAHAFGYDISLLKLVGINPIVVHGGGPQISAMLDRLKIRSEFIDGLRVTDKSMVDVIEMVLSGSVNKQVTQLINRAGALAVGISGKDGGLIQARRLTRTKRDPDSEIEKVIDLGFVGQPEKIDPRVLYALLGAGLIPVIAPVGVGEDGETYNINADTAAGAIAGAVHASRLLMLTDVPGVLDENGKLIEELSADEAMRRIADGSISGGMIPKVETCLEAVRKGAKAAVILDGRVPHSCLLELFTRAGPGTLIKA.

Substrate-binding positions include 66–67 (GG), Arg-88, and Asn-193.

The protein belongs to the acetylglutamate kinase family. ArgB subfamily.

The protein localises to the cytoplasm. The catalysed reaction is N-acetyl-L-glutamate + ATP = N-acetyl-L-glutamyl 5-phosphate + ADP. It functions in the pathway amino-acid biosynthesis; L-arginine biosynthesis; N(2)-acetyl-L-ornithine from L-glutamate: step 2/4. Its function is as follows. Catalyzes the ATP-dependent phosphorylation of N-acetyl-L-glutamate. The chain is Acetylglutamate kinase from Gluconobacter oxydans (strain 621H) (Gluconobacter suboxydans).